A 322-amino-acid chain; its full sequence is uncharacterized protein (322 aa).

The 242-residue stretch at 26–267 (HFGHKVFKVA…CDQLEIIPPE (242 aa)) folds into the Radical SAM core domain. [4Fe-4S] cluster contacts are provided by C42, C54, and C57.

Belongs to the radical SAM superfamily. [4Fe-4S] cluster serves as cofactor.

This is an uncharacterized protein from Bacillus subtilis (strain 168).